A 104-amino-acid polypeptide reads, in one-letter code: Growth-regulated protein homolog (104 aa).

A signal peptide spans 1-31 (MAPAATAAAPRLLRAALLLLLLVAAGRRAAG). 2 disulfide bridges follow: cysteine 40–cysteine 66 and cysteine 42–cysteine 82.

Belongs to the intercrine alpha (chemokine CxC) family.

The protein localises to the secreted. Plays a role in monocyte adhesion to the endothelium. This Oryctolagus cuniculus (Rabbit) protein is Growth-regulated protein homolog.